We begin with the raw amino-acid sequence, 313 residues long: Ribosomal RNA small subunit methyltransferase H (313 aa).

S-adenosyl-L-methionine contacts are provided by residues 35–37, Asp55, Phe80, Asp102, and Gln109; that span reads GGH.

This sequence belongs to the methyltransferase superfamily. RsmH family.

Its subcellular location is the cytoplasm. The enzyme catalyses cytidine(1402) in 16S rRNA + S-adenosyl-L-methionine = N(4)-methylcytidine(1402) in 16S rRNA + S-adenosyl-L-homocysteine + H(+). Specifically methylates the N4 position of cytidine in position 1402 (C1402) of 16S rRNA. The chain is Ribosomal RNA small subunit methyltransferase H from Shewanella oneidensis (strain ATCC 700550 / JCM 31522 / CIP 106686 / LMG 19005 / NCIMB 14063 / MR-1).